A 147-amino-acid polypeptide reads, in one-letter code: Hemoglobin subunit beta (147 aa).

N-acetylvaline is present on Val-2. The region spanning 3–147 (HLTAEEKSAV…VANALAHKYH (145 aa)) is the Globin domain. Thr-13 carries the post-translational modification Phosphothreonine. Ser-45 is subject to Phosphoserine. Lys-60 is modified (N6-acetyllysine). His-64 provides a ligand contact to heme b. N6-acetyllysine is present on Lys-83. His-93 contributes to the heme b binding site. Cys-94 carries the S-nitrosocysteine modification. Lys-145 is modified (N6-acetyllysine).

Belongs to the globin family. As to quaternary structure, heterotetramer of two alpha chains and two beta chains. In terms of tissue distribution, red blood cells.

In terms of biological role, involved in oxygen transport from the lung to the various peripheral tissues. The sequence is that of Hemoglobin subunit beta (HBB) from Sapajus apella (Brown-capped capuchin).